The following is a 693-amino-acid chain: Glycine--tRNA ligase beta subunit (693 aa).

This sequence belongs to the class-II aminoacyl-tRNA synthetase family. Tetramer of two alpha and two beta subunits.

The protein localises to the cytoplasm. It catalyses the reaction tRNA(Gly) + glycine + ATP = glycyl-tRNA(Gly) + AMP + diphosphate. The protein is Glycine--tRNA ligase beta subunit of Natranaerobius thermophilus (strain ATCC BAA-1301 / DSM 18059 / JW/NM-WN-LF).